We begin with the raw amino-acid sequence, 613 residues long: MKRSTTQILTRLRELMLRAQVGDSCGISAYIVPSDDAHQSEYQCQHDERRSFVSGFDGSAGTAVITTETALLWTDGRYYQQAEKQLDSNWVLMRDGLSATPSIGAWLAKNLPKGSFVGVDPRLLSFRVWKPIETELSSAECQLVPIEGNLIDEVWGEDQPPQTSNKIITLKLEHSGVTIAKKWDVVRQQLKEKNADALVVSALDEIAWFLNLRGSDIDFNPVFFSYLIVTNDELLLFVDSGKLPTDFVQHQKENNVQISVLPYASIGIEISKIVSTRESKIWIAPTSSYYLTALIPKSRRIQEVTPICVLKAIKNDVEIAGFINSHIRDGVALCQYFAWLEDQVNKGAEVDEMSGADKLESFRSTKDKYMGLSFTTISASGPNGSVIHYHPKKETNRKINDKEIYLCDSGAQYLDGTTDVTRTLHFGEPTEFQKEAYTRVLKGQLSFGSTVFPAKVKGQVLDTLARKALWDVGLDYGHGTGHGVGHFLNVHEGPMGVGIRLMPDDPGLQANMFISNEPGFYQDGEFGIRVEDIVQIVPGQVAHNFSNRGALTFKTITMCPKQTKMIKKELLSDAEVKLLNSYHQQVWDTLSPILSREGDEFTLSWLKKEVQPI.

Residues Arg-77 and His-388 each coordinate substrate. Mn(2+) is bound by residues Asp-408, Asp-419, and His-482. Residues His-482, His-491, and Glu-517 each coordinate substrate. Residues Glu-517 and Glu-531 each contribute to the Mn(2+) site.

This sequence belongs to the peptidase M24B family. Mn(2+) is required as a cofactor. In terms of tissue distribution, detected in gut, brain, testes and ovary.

Its subcellular location is the cytoplasm. It carries out the reaction Release of any N-terminal amino acid, including proline, that is linked to proline, even from a dipeptide or tripeptide.. Inhibited by the chelating agent EDTA. Divalent metal ions have substrate- and concentration-dependent effects on activity. Activity towards bradykinin is inhibited with increasing Mn(2+) concentration. Activity towards substance P is stimulated by low Mn(2+) concentrations (in the range 10 uM-1 mM) but inhibited by Mn(2+) concentrations in excess of 1 mM. Ca(2+), Mg(2+) and Co(2+) stimulate activity towards substance P at concentrations of 10-100 uM but are inhibitory at concentrations of 1 mM. Zn(2+), Ni(2+) and Cu(2+) strongly inhibit activity towards substance P at concentrations of 1 mM. Catalyzes the removal of a penultimate prolyl residue from the N-termini of peptides, such as Arg-Pro-Pro. This Drosophila melanogaster (Fruit fly) protein is Xaa-Pro aminopeptidase ApepP.